The primary structure comprises 145 residues: Putative pre-16S rRNA nuclease (145 aa).

The protein belongs to the YqgF nuclease family.

Its subcellular location is the cytoplasm. Could be a nuclease involved in processing of the 5'-end of pre-16S rRNA. In Prochlorococcus marinus (strain MIT 9211), this protein is Putative pre-16S rRNA nuclease.